The primary structure comprises 247 residues: GTP cyclohydrolase 1 type 2 homolog (247 aa).

Positions 63, 64, 101, 215, and 219 each coordinate a divalent metal cation.

It belongs to the GTP cyclohydrolase I type 2/NIF3 family. As to quaternary structure, homohexamer.

The chain is GTP cyclohydrolase 1 type 2 homolog from Buchnera aphidicola subsp. Baizongia pistaciae (strain Bp).